A 162-amino-acid chain; its full sequence is Universal stress protein MJ0577 (162 aa).

Residues Pro-11, Val-41, 127–133 (GSHGKTN), and 141–143 (SVT) contribute to the ATP site.

Belongs to the universal stress protein A family. In terms of assembly, homodimer. Mn(2+) serves as cofactor.

It localises to the cytoplasm. This chain is Universal stress protein MJ0577, found in Methanocaldococcus jannaschii (strain ATCC 43067 / DSM 2661 / JAL-1 / JCM 10045 / NBRC 100440) (Methanococcus jannaschii).